A 422-amino-acid chain; its full sequence is MSQLMEELSFRGLIQQQTDEEGLTKLLAEEKIKLYSGFDPTADSLHIGHLLPILTLRRFQEAGHHPIALVGGATGLIGDPSFKKAERSLNPAEIVEHWSDKIKGQLSQFLDFEAGENPAVIVNNYDWISQMNVITFLRDIGKNFGVNFMLAKDIVSSRIETGISYTEFSYVILQSLDFLNLYRNENCKLQIGGSDQWGNITSGLELIRKSEAEGAKAFGLTMPLVTKADGTKFGKTEGGAIWLDKEKTSPYEFYQFWINTDDRDVVKYLKYFTFLSKEEIASYEEKVQTAPEKREAQRRLAEEVTTLVHGRESLEQAVNISNALFKGEIKSLSAEEVKVGFKDVPSMEKSSTEELTLVDLLVESKLSPSKRQAREDITNGAVSINGERQTDKDYVLSAEDRIENQFTVLRRGKKKYFLVTYK.

Position 35 (Tyr-35) interacts with L-tyrosine. Residues 40–49 carry the 'HIGH' region motif; sequence PTADSLHIGH. Residues Tyr-170 and Gln-174 each contribute to the L-tyrosine site. The 'KMSKS' region signature appears at 232-236; the sequence is KFGKT. Lys-235 is a binding site for ATP. An S4 RNA-binding domain is found at 355 to 421; the sequence is LTLVDLLVES…GKKKYFLVTY (67 aa).

It belongs to the class-I aminoacyl-tRNA synthetase family. TyrS type 1 subfamily. Homodimer.

It is found in the cytoplasm. It carries out the reaction tRNA(Tyr) + L-tyrosine + ATP = L-tyrosyl-tRNA(Tyr) + AMP + diphosphate + H(+). Its function is as follows. Catalyzes the attachment of tyrosine to tRNA(Tyr) in a two-step reaction: tyrosine is first activated by ATP to form Tyr-AMP and then transferred to the acceptor end of tRNA(Tyr). The chain is Tyrosine--tRNA ligase from Bacillus pumilus (strain SAFR-032).